Consider the following 294-residue polypeptide: MSNLKEIKRKIKSVHNTQKTTNAMKLVSTAKLRKAEEAAKKSKVFAQKIDEVLSEIAFKINQYEGLDDKLPFFRKKDNIEKMDIIFVTADKGLCGGFNIKTIKAVNEMLEDCKTKKIKVRLRAIGKTGIEYFNFQNIEILEKYLDTSSSPDYDKACAIIQKAVDDFVNGVTDKIVIIHNGYKNMISQEIRINELLPVEAIVSKEEQKSESLMDLEPEDEEILNDLLKTYFEYNMYFSLVDSLAAEHSARMQAMDNATNNAKARVKQLNLAYNKARQESITTELIEIISGVESMK.

This sequence belongs to the ATPase gamma chain family. F-type ATPases have 2 components, CF(1) - the catalytic core - and CF(0) - the membrane proton channel. CF(1) has five subunits: alpha(3), beta(3), gamma(1), delta(1), epsilon(1). CF(0) has three main subunits: a, b and c.

The protein localises to the cell inner membrane. Produces ATP from ADP in the presence of a proton gradient across the membrane. The gamma chain is believed to be important in regulating ATPase activity and the flow of protons through the CF(0) complex. In Campylobacter lari (strain RM2100 / D67 / ATCC BAA-1060), this protein is ATP synthase gamma chain.